The sequence spans 353 residues: Melanin-concentrating hormone receptor 1 (353 aa).

Residues 1–31 (MDLEASLLPTGPNTSNTSDGPDNLTSAGSPP) are disordered. The Extracellular segment spans residues 1–45 (MDLEASLLPTGPNTSNTSDGPDNLTSAGSPPRSGSVSYINIIMPS). The span at 11–31 (GPNTSNTSDGPDNLTSAGSPP) shows a compositional bias: polar residues. Residues N13, N16, and N23 are each glycosylated (N-linked (GlcNAc...) asparagine). A helical membrane pass occupies residues 46 to 66 (VFGTICLLGIIGNSMVIFAVV). At 67-79 (KKSKLHWCNNVPD) the chain is on the cytoplasmic side. A helical membrane pass occupies residues 80 to 100 (IFIINLSVVDLLFLLGMPFMI). Residues 101 to 118 (HQLMGNGVWHFGETMCTL) are Extracellular-facing. Residues C116 and C194 are joined by a disulfide bond. The chain crosses the membrane as a helical span at residues 119 to 139 (ITAMDANSQFTSTYILTAMAI). The Cytoplasmic segment spans residues 140-161 (DRYLATVHPISSTKFRKPSVAT). The helical transmembrane segment at 162–182 (LVICLLWALSFISITPVWLYA) threads the bilayer. Over 183 to 204 (RLIPFPGGAVGCGIRLPNPDTD) the chain is Extracellular. A helical transmembrane segment spans residues 205–225 (LYWFTLYQFFLAFALPFVVIT). Over 226 to 257 (AAYVRILQRMTSSVAPASQRSIRLRTKRVTRT) the chain is Cytoplasmic. The chain crosses the membrane as a helical span at residues 258–278 (AIAICLVFFVCWAPYYVLQLT). Residues 279-294 (QLSISRPTLTFVYLYN) lie on the Extracellular side of the membrane. Residues 295–315 (AAISLGYANSCLNPFVYIVLC) form a helical membrane-spanning segment. The Cytoplasmic portion of the chain corresponds to 316-353 (ETFRKRLVLSVKPAAQGQLRAVSNAQTADEERTESKGT).

The protein belongs to the G-protein coupled receptor 1 family. As to quaternary structure, interacts with NCDN.

It localises to the cell membrane. Functionally, receptor for melanin-concentrating hormone, coupled to both G proteins that inhibit adenylyl cyclase and G proteins that activate phosphoinositide hydrolysis. The protein is Melanin-concentrating hormone receptor 1 of Macaca mulatta (Rhesus macaque).